A 473-amino-acid chain; its full sequence is Reticulon-4 receptor (473 aa).

Residues 1–26 form the signal peptide; it reads MKRASAGGSRLLAWVLWLQAWQVAAP. 2 cysteine pairs are disulfide-bonded: C27–C33 and C31–C43. In terms of domain architecture, LRRNT spans 27–54; that stretch reads CPGACVCYNEPKVTTSCPQQGLQAVPVG. LRR repeat units lie at residues 55-79, 81-103, 104-128, 129-152, 153-176, 178-200, 202-224, 225-248, and 250-273; these read IPAA…SFRA, RNLT…AFTG, LALL…TFHG, LGRL…LFRG, LAAL…TFRD, GNLT…AFRG, HSLD…AFRD, LGRL…ALAP, and RALQ…PLWA. N82 carries an N-linked (GlcNAc...) asparagine glycan. N-linked (GlcNAc...) asparagine glycosylation is present at N179. Residues 260–310 form the LRRCT domain; sequence NPWVCDCRARPLWAWLQKFRGSSSEVPCSLPQRLAGRDLKRLAANDLQGCA. Intrachain disulfides connect C264–C287, C266–C335, and C309–C336. A disordered region spans residues 346 to 447; sequence VLEPGRPASA…GGGTGDSEGS (102 aa). The span at 413–429 shows a compositional bias: basic residues; sequence PRRRPGCSRKNRTRSHC. Residues 434–445 are compositionally biased toward gly residues; it reads AGSGGGGTGDSE. S447 carries GPI-anchor amidated serine lipidation. Residues 448 to 473 constitute a propeptide, removed in mature form; sequence GALPSLTCSLTPLGLALVLWTVLGPC.

The protein belongs to the Nogo receptor family. Homodimer. Interacts with MAG. Interacts with RTN4. Interacts with NGFR. Interacts with LINGO1. Interacts with KIAA0319L. Interacts with OLFM1; this inhibits interaction with LINGO1 and NGFR. Interacts with OMG. In terms of processing, N-glycosylated. O-glycosylated. Contains terminal sialic acid groups on its glycan chains. Widespread in the brain but highest levels in the gray matter. Low levels in heart and kidney; not expressed in oligodendrocytes (white matter).

It is found in the cell membrane. It localises to the membrane raft. Its subcellular location is the cell projection. The protein resides in the dendrite. The protein localises to the axon. It is found in the perikaryon. In terms of biological role, receptor for RTN4, OMG and MAG. Functions as a receptor for the sialylated gangliosides GT1b and GM1. Besides, functions as a receptor for chondroitin sulfate proteoglycans. Can also bind heparin. Intracellular signaling cascades are triggered via the coreceptor NGFR. Signaling mediates activation of Rho and downstream reorganization of the actin cytoskeleton. Mediates axonal growth inhibition. Plays a role in regulating axon regeneration and neuronal plasticity in the adult central nervous system. Plays a role in postnatal brain development. Required for normal axon migration across the brain midline and normal formation of the corpus callosum. Protects motoneurons against apoptosis; protection against apoptosis is probably mediated via interaction with MAG. Acts in conjunction with RTN4 and LINGO1 in regulating neuronal precursor cell motility during cortical development. Like other family members, plays a role in restricting the number dendritic spines and the number of synapses that are formed during brain development. The chain is Reticulon-4 receptor (RTN4R) from Homo sapiens (Human).